A 454-amino-acid polypeptide reads, in one-letter code: Bifunctional protein GlmU (454 aa).

The tract at residues 1–226 (MALNVVILAA…AIEVEGANNR (226 aa)) is pyrophosphorylase. UDP-N-acetyl-alpha-D-glucosamine is bound by residues 8–11 (LAAG), Lys-22, Gln-73, 78–79 (GT), 100–102 (YGD), Gly-137, Glu-151, Asn-166, and Asn-224. Asp-102 is a binding site for Mg(2+). Asn-224 contacts Mg(2+). Residues 227–247 (VQLAQLERAYQARAAEKLMLE) form a linker region. The interval 248-454 (GANLRDPARI…GWTRPVKQKK (207 aa)) is N-acetyltransferase. UDP-N-acetyl-alpha-D-glucosamine is bound by residues Arg-330 and Lys-348. His-360 serves as the catalytic Proton acceptor. UDP-N-acetyl-alpha-D-glucosamine-binding residues include Tyr-363 and Asn-374. Acetyl-CoA contacts are provided by residues Ala-377, 383 to 384 (NY), Ser-402, Ala-420, and Arg-437.

The protein in the N-terminal section; belongs to the N-acetylglucosamine-1-phosphate uridyltransferase family. In the C-terminal section; belongs to the transferase hexapeptide repeat family. In terms of assembly, homotrimer. Mg(2+) is required as a cofactor.

Its subcellular location is the cytoplasm. It carries out the reaction alpha-D-glucosamine 1-phosphate + acetyl-CoA = N-acetyl-alpha-D-glucosamine 1-phosphate + CoA + H(+). It catalyses the reaction N-acetyl-alpha-D-glucosamine 1-phosphate + UTP + H(+) = UDP-N-acetyl-alpha-D-glucosamine + diphosphate. It participates in nucleotide-sugar biosynthesis; UDP-N-acetyl-alpha-D-glucosamine biosynthesis; N-acetyl-alpha-D-glucosamine 1-phosphate from alpha-D-glucosamine 6-phosphate (route II): step 2/2. It functions in the pathway nucleotide-sugar biosynthesis; UDP-N-acetyl-alpha-D-glucosamine biosynthesis; UDP-N-acetyl-alpha-D-glucosamine from N-acetyl-alpha-D-glucosamine 1-phosphate: step 1/1. The protein operates within bacterial outer membrane biogenesis; LPS lipid A biosynthesis. Its function is as follows. Catalyzes the last two sequential reactions in the de novo biosynthetic pathway for UDP-N-acetylglucosamine (UDP-GlcNAc). The C-terminal domain catalyzes the transfer of acetyl group from acetyl coenzyme A to glucosamine-1-phosphate (GlcN-1-P) to produce N-acetylglucosamine-1-phosphate (GlcNAc-1-P), which is converted into UDP-GlcNAc by the transfer of uridine 5-monophosphate (from uridine 5-triphosphate), a reaction catalyzed by the N-terminal domain. In Shewanella loihica (strain ATCC BAA-1088 / PV-4), this protein is Bifunctional protein GlmU.